The primary structure comprises 198 residues: Outer-membrane lipoprotein carrier protein (198 aa).

An N-terminal signal peptide occupies residues 1-17; the sequence is MKKFLFSLCLLSSTVLA.

Belongs to the LolA family. In terms of assembly, monomer.

Its subcellular location is the periplasm. Functionally, participates in the translocation of lipoproteins from the inner membrane to the outer membrane. Only forms a complex with a lipoprotein if the residue after the N-terminal Cys is not an aspartate (The Asp acts as a targeting signal to indicate that the lipoprotein should stay in the inner membrane). The polypeptide is Outer-membrane lipoprotein carrier protein (Aliivibrio fischeri (strain MJ11) (Vibrio fischeri)).